We begin with the raw amino-acid sequence, 695 residues long: Glycine--tRNA ligase beta subunit (695 aa).

This sequence belongs to the class-II aminoacyl-tRNA synthetase family. In terms of assembly, tetramer of two alpha and two beta subunits.

The protein localises to the cytoplasm. It catalyses the reaction tRNA(Gly) + glycine + ATP = glycyl-tRNA(Gly) + AMP + diphosphate. This Desulforamulus reducens (strain ATCC BAA-1160 / DSM 100696 / MI-1) (Desulfotomaculum reducens) protein is Glycine--tRNA ligase beta subunit.